A 150-amino-acid polypeptide reads, in one-letter code: Ribosomal RNA large subunit methyltransferase H (150 aa).

Residues Ala100 and 118-123 (LSEMTF) each bind S-adenosyl-L-methionine.

It belongs to the RNA methyltransferase RlmH family. In terms of assembly, homodimer.

The protein localises to the cytoplasm. The catalysed reaction is pseudouridine(1915) in 23S rRNA + S-adenosyl-L-methionine = N(3)-methylpseudouridine(1915) in 23S rRNA + S-adenosyl-L-homocysteine + H(+). Its function is as follows. Specifically methylates the pseudouridine at position 1915 (m3Psi1915) in 23S rRNA. This Helicobacter pylori (strain ATCC 700392 / 26695) (Campylobacter pylori) protein is Ribosomal RNA large subunit methyltransferase H.